We begin with the raw amino-acid sequence, 549 residues long: 4-hydroxybutyrate--CoA ligase 2 (549 aa).

ATP-binding positions include 195–203, 336–341, aspartate 425, and arginine 440; these read TSGTTGLPK and ETYGPH. CoA is bound by residues 448–450, lysine 506, and 514–516; these read GGE and CPK. Lysine 530 serves as a coordination point for ATP.

The protein belongs to the ATP-dependent AMP-binding enzyme family. Mg(2+) serves as cofactor. Requires Mn(2+) as cofactor.

It catalyses the reaction 4-hydroxybutanoate + ATP + CoA = 4-hydroxybutanoyl-CoA + AMP + diphosphate. The enzyme catalyses acetate + ATP + CoA = acetyl-CoA + AMP + diphosphate. It carries out the reaction propanoate + ATP + CoA = propanoyl-CoA + AMP + diphosphate. The catalysed reaction is a medium-chain fatty acid + ATP + CoA = a medium-chain fatty acyl-CoA + AMP + diphosphate. Catalyzes the ligation of coenzyme A (CoA) to 4-hydroxybutyrate (4HB). It can also use butyrate, valerate, propionate, acetate and 3-hydroxybutyrate (3HB) as substrates. The sequence is that of 4-hydroxybutyrate--CoA ligase 2 from Metallosphaera sedula (strain ATCC 51363 / DSM 5348 / JCM 9185 / NBRC 15509 / TH2).